The primary structure comprises 399 residues: P2X purinoceptor 1 (399 aa).

At 1-28 (MARRLQDELSAFFFEYDTPRMVLVRNKK) the chain is on the cytoplasmic side. Residues 29-50 (VGVIFRLIQLVVLVYVIGWVFV) form a helical membrane-spanning segment. At 51–338 (YEKGYQTSSD…IPTMTTIGSG (288 aa)) the chain is on the extracellular side. The CTP site is built by K68, K70, and K140. Residue K70 coordinates ATP. Cystine bridges form between C117–C165, C126–C149, and C132–C159. N-linked (GlcNAc...) asparagine glycosylation is found at N153 and N184. T186 serves as a coordination point for CTP. Residue T186 coordinates ATP. An N-linked (GlcNAc...) asparagine glycan is attached at N210. 2 disulfide bridges follow: C217/C227 and C261/C270. 3 residues coordinate ATP: S286, N290, and R292. N290 and R292 together coordinate CTP. The N-linked (GlcNAc...) asparagine glycan is linked to N300. K309 contacts CTP. K309 serves as a coordination point for ATP. The tract at residues 331 to 338 (TMTTIGSG) is pore-forming motif. The chain crosses the membrane as a helical span at residues 339–358 (IGIFGVATVLCDLLLLHILP). The Cytoplasmic segment spans residues 359–399 (KRHYYKQKKFKYAEDMGPGEGEHDPVATSSTLGLQENMRTS). Residues 374–399 (MGPGEGEHDPVATSSTLGLQENMRTS) are disordered. Residues 385–399 (ATSSTLGLQENMRTS) are compositionally biased toward polar residues. A phosphoserine mark is found at S387 and S388. T389 is modified (phosphothreonine).

The protein belongs to the P2X receptor family. Functional P2XRs are organized as homomeric and heteromeric trimers. Homotrimer. Forms heterodimer with P2RX2. Forms heterodimer with P2RX4. Forms heterodimer with P2RX5. As to expression, high levels in vas deferens and urinary bladder. Lower extent in spinal cord, coeliac ganglion, lung and spleen (probably in the smooth muscle part of both organs).

It is found in the cell membrane. It catalyses the reaction Ca(2+)(in) = Ca(2+)(out). It carries out the reaction K(+)(in) = K(+)(out). The catalysed reaction is Na(+)(in) = Na(+)(out). With respect to regulation, activated by low concentrations of ATP (&lt;1 uM). Undergoes rapid desensitisation. Sensitives to the ATP agonist:alpha/beta-methylene-ATP. Modulated by cholesterol. ATP-gated nonselective transmembrane cation channel permeable to potassium, sodium and with relatively high calcium permeability. Furthermore, CTP functions as a weak affinity agonist for P2RX1. Plays a role a role in urogenital, immune and cardiovascular function. Specifically, plays an important role in neurogenic contraction of smooth muscle of the vas deferens, and therefore is essential for normal male reproductive function. In addition, contributes to smooth muscle contractions of the urinary bladder. On platelets, contributes to platelet activation and aggregation and thereby, also to thrombosis. On neutrophils, it is involved in chemotaxis and in mitigating the activation of circulating cells. This is P2X purinoceptor 1 (P2rx1) from Rattus norvegicus (Rat).